Reading from the N-terminus, the 529-residue chain is NADPH-dependent thioredoxin reductase 3 (529 aa).

The N-terminal 67 residues, 1–67, are a transit peptide targeting the chloroplast; sequence MAASPKIGIG…SSDSLRLRVS (67 aa). A disordered region spans residues 54 to 78; sequence TRTRSSDSLRLRVSATANSPSSSSS. Residues 64–78 are compositionally biased toward low complexity; it reads LRVSATANSPSSSSS. FAD contacts are provided by residues 91–94, 113–120, Asn133, Val166, and Cys220; these read SGPA and EGYQMGGV. Cys217 and Cys220 are joined by a disulfide. NADP(+)-binding residues include Thr240, Arg265, Ile324, and Tyr344. FAD is bound by residues Asp364 and 371–374; that span reads RQAV. Arg371 lines the NADP(+) pocket. Residues 403-529 form the Thioredoxin domain; the sequence is PQTEEAKKEF…EYREFIEANK (127 aa). Catalysis depends on nucleophile residues Cys454 and Cys457. Cys454 and Cys457 form a disulfide bridge.

This sequence belongs to the class-II pyridine nucleotide-disulfide oxidoreductase family. As to quaternary structure, may homodimerize. Interacts with the 2-Cys peroxiredoxin BAS1. FAD is required as a cofactor.

The protein localises to the plastid. It is found in the chloroplast. It catalyses the reaction [thioredoxin]-dithiol + NADP(+) = [thioredoxin]-disulfide + NADPH + H(+). Its function is as follows. Thioredoxin reductase (TR) that exhibits both TR and thioredoxin (Trx) activities. Contains a C-terminal functional Trx domain. Functions as an electron donor for plastidial 2-Cys peroxiredoxins and participates in a NADPH-dependent hydrogen peroxide scavenging system in chloroplasts in the dark. Required for chlorophyll biosynthesis and biogenesis of the photosynthetic apparatus. Activates aerobic cyclase which converts Mg-protoporhyrin monomethyl ester into protochlorophyllide. Involved in a light-dependent regulation of starch biosynthesis by redox activation of the ADP-glucose pyrophosphorylase (AGPase), a central enzyme of starch synthesis. The protein is NADPH-dependent thioredoxin reductase 3 of Arabidopsis thaliana (Mouse-ear cress).